The primary structure comprises 33 residues: Tail virion protein G9P (33 aa).

Residues 5–25 form a helical membrane-spanning segment; it reads VGSFLGAYFLGFALFYGIGFF.

It belongs to the inovirus G9P protein family.

The protein resides in the virion. It localises to the host membrane. Its function is as follows. May initiate with G7P the virion concomitant assembly-budding process, by interacting with the packaging signal of the viral genome. The assembly-budding takes place at the host inner membrane. In turn, G7P and G9P are present at the end of the filamentous virion that emerges first from the bacterial host. This is Tail virion protein G9P (IX) from Salmonella phage IKe (Bacteriophage IKe).